The chain runs to 582 residues: Putative phospholipase B-like 2 (582 aa).

A signal peptide spans 1–42; sequence MTRLIRSKKQFLIRSLHSVFYYLGSLLHSTFEMNVFIGLLLA. N-linked (GlcNAc...) asparagine glycosylation is found at Asn91, Asn141, Asn178, Asn224, and Asn318. Cys139 and Cys146 are oxidised to a cystine. Cys480 and Cys482 form a disulfide bridge. N-linked (GlcNAc...) asparagine glycosylation is present at Asn502.

This sequence belongs to the phospholipase B-like family.

The protein localises to the secreted. Functionally, putative phospholipase. The protein is Putative phospholipase B-like 2 of Caenorhabditis elegans.